The sequence spans 437 residues: Na(+)/H(+) antiporter NhaA (437 aa).

The next 11 helical transmembrane spans lie at 29-49 (TAGI…NTAW), 74-94 (LKHW…ALEL), 111-131 (LPVA…LLLV), 139-159 (GWGT…ALLG), 168-188 (LFLL…VAVG), 196-216 (VALG…LLGI), 229-249 (IWLA…ILGL), 307-327 (IALH…SNAG), 341-361 (IAIV…FSFL), 376-396 (WSLL…ALFI), and 411-431 (LGVL…LTLL).

The protein belongs to the NhaA Na(+)/H(+) (TC 2.A.33) antiporter family.

The protein localises to the cell inner membrane. The catalysed reaction is Na(+)(in) + 2 H(+)(out) = Na(+)(out) + 2 H(+)(in). Its function is as follows. Na(+)/H(+) antiporter that extrudes sodium in exchange for external protons. This Rhizobium meliloti (strain 1021) (Ensifer meliloti) protein is Na(+)/H(+) antiporter NhaA.